The sequence spans 106 residues: Urease subunit beta (106 aa).

Belongs to the urease beta subunit family. As to quaternary structure, heterotrimer of UreA (gamma), UreB (beta) and UreC (alpha) subunits. Three heterotrimers associate to form the active enzyme.

Its subcellular location is the cytoplasm. The enzyme catalyses urea + 2 H2O + H(+) = hydrogencarbonate + 2 NH4(+). It participates in nitrogen metabolism; urea degradation; CO(2) and NH(3) from urea (urease route): step 1/1. The protein is Urease subunit beta of Synechococcus sp. (strain CC9902).